A 148-amino-acid chain; its full sequence is MTIWVDADACPKMIKDILFRAAIRTNTNLILVANSYLTYPNSPFIRSILVEKGYDRADHYITSHMKAKDLVITADIPLAAEVIVKQGLAMSPRGELFTANNIKQRLTLRDINEQLRSAGERTGGPSALSAKEKTSFANALDRWLAKNK.

It belongs to the UPF0178 family.

This is UPF0178 protein lpl0088 from Legionella pneumophila (strain Lens).